A 683-amino-acid chain; its full sequence is DNA-directed RNA polymerase subunit beta' (683 aa).

Residues Cys-69, Cys-71, Cys-87, and Cys-90 each contribute to the Zn(2+) site. Residues Asp-489, Asp-491, and Asp-493 each contribute to the Mg(2+) site.

This sequence belongs to the RNA polymerase beta' chain family. RpoC1 subfamily. As to quaternary structure, in plastids the minimal PEP RNA polymerase catalytic core is composed of four subunits: alpha, beta, beta', and beta''. When a (nuclear-encoded) sigma factor is associated with the core the holoenzyme is formed, which can initiate transcription. Requires Mg(2+) as cofactor. Zn(2+) is required as a cofactor.

It localises to the plastid. Its subcellular location is the chloroplast. It carries out the reaction RNA(n) + a ribonucleoside 5'-triphosphate = RNA(n+1) + diphosphate. DNA-dependent RNA polymerase catalyzes the transcription of DNA into RNA using the four ribonucleoside triphosphates as substrates. The sequence is that of DNA-directed RNA polymerase subunit beta' from Saccharum hybrid (Sugarcane).